A 429-amino-acid polypeptide reads, in one-letter code: Glutamate-1-semialdehyde 2,1-aminomutase 2 (429 aa).

Lysine 268 is subject to N6-(pyridoxal phosphate)lysine.

It belongs to the class-III pyridoxal-phosphate-dependent aminotransferase family. HemL subfamily. As to quaternary structure, homodimer. It depends on pyridoxal 5'-phosphate as a cofactor.

Its subcellular location is the cytoplasm. The catalysed reaction is (S)-4-amino-5-oxopentanoate = 5-aminolevulinate. It participates in porphyrin-containing compound metabolism; protoporphyrin-IX biosynthesis; 5-aminolevulinate from L-glutamyl-tRNA(Glu): step 2/2. The protein is Glutamate-1-semialdehyde 2,1-aminomutase 2 of Bacillus velezensis (strain DSM 23117 / BGSC 10A6 / LMG 26770 / FZB42) (Bacillus amyloliquefaciens subsp. plantarum).